We begin with the raw amino-acid sequence, 258 residues long: Indole-3-glycerol phosphate synthase 2 (258 aa).

Belongs to the TrpC family.

The catalysed reaction is 1-(2-carboxyphenylamino)-1-deoxy-D-ribulose 5-phosphate + H(+) = (1S,2R)-1-C-(indol-3-yl)glycerol 3-phosphate + CO2 + H2O. It functions in the pathway amino-acid biosynthesis; L-tryptophan biosynthesis; L-tryptophan from chorismate: step 4/5. The function of the second trp operon in S.coelicolor is to produce tryptophan for the biosynthesis of calcium-dependent antibiotic (CDA). In Streptomyces coelicolor (strain ATCC BAA-471 / A3(2) / M145), this protein is Indole-3-glycerol phosphate synthase 2 (trpC2).